A 263-amino-acid polypeptide reads, in one-letter code: Acetylglutamate kinase (263 aa).

Substrate contacts are provided by residues Gly48–Gly49, Arg70, and Asn162.

This sequence belongs to the acetylglutamate kinase family. ArgB subfamily.

The protein localises to the cytoplasm. It catalyses the reaction N-acetyl-L-glutamate + ATP = N-acetyl-L-glutamyl 5-phosphate + ADP. The protein operates within amino-acid biosynthesis; L-arginine biosynthesis; N(2)-acetyl-L-ornithine from L-glutamate: step 2/4. In terms of biological role, catalyzes the ATP-dependent phosphorylation of N-acetyl-L-glutamate. This Vibrio parahaemolyticus serotype O3:K6 (strain RIMD 2210633) protein is Acetylglutamate kinase.